The following is a 294-amino-acid chain: Tryptophan 2,3-dioxygenase (294 aa).

The tract at residues 1 to 20 (MSEFKGCPFSGAASEAGTKA) is disordered. Residues 63–67 (FIVQH), Tyr125, and Arg129 contribute to the substrate site. Residue His252 coordinates heme. Thr266 provides a ligand contact to substrate.

Belongs to the tryptophan 2,3-dioxygenase family. As to quaternary structure, homotetramer. The cofactor is heme.

The catalysed reaction is L-tryptophan + O2 = N-formyl-L-kynurenine. It functions in the pathway amino-acid degradation; L-tryptophan degradation via kynurenine pathway; L-kynurenine from L-tryptophan: step 1/2. In terms of biological role, heme-dependent dioxygenase that catalyzes the oxidative cleavage of the L-tryptophan (L-Trp) pyrrole ring and converts L-tryptophan to N-formyl-L-kynurenine. Catalyzes the oxidative cleavage of the indole moiety. This Cupriavidus necator (strain ATCC 17699 / DSM 428 / KCTC 22496 / NCIMB 10442 / H16 / Stanier 337) (Ralstonia eutropha) protein is Tryptophan 2,3-dioxygenase.